Here is a 243-residue protein sequence, read N- to C-terminus: Leucyl/phenylalanyl-tRNA--protein transferase (243 aa).

It belongs to the L/F-transferase family.

The protein localises to the cytoplasm. The enzyme catalyses N-terminal L-lysyl-[protein] + L-leucyl-tRNA(Leu) = N-terminal L-leucyl-L-lysyl-[protein] + tRNA(Leu) + H(+). It catalyses the reaction N-terminal L-arginyl-[protein] + L-leucyl-tRNA(Leu) = N-terminal L-leucyl-L-arginyl-[protein] + tRNA(Leu) + H(+). The catalysed reaction is L-phenylalanyl-tRNA(Phe) + an N-terminal L-alpha-aminoacyl-[protein] = an N-terminal L-phenylalanyl-L-alpha-aminoacyl-[protein] + tRNA(Phe). In terms of biological role, functions in the N-end rule pathway of protein degradation where it conjugates Leu, Phe and, less efficiently, Met from aminoacyl-tRNAs to the N-termini of proteins containing an N-terminal arginine or lysine. The polypeptide is Leucyl/phenylalanyl-tRNA--protein transferase (Saccharophagus degradans (strain 2-40 / ATCC 43961 / DSM 17024)).